The primary structure comprises 278 residues: Pantothenate synthetase (278 aa).

ATP is bound at residue 31-38; the sequence is MGALHEGH. The active-site Proton donor is the histidine 38. Position 62 (glutamine 62) interacts with (R)-pantoate. Glutamine 62 serves as a coordination point for beta-alanine. Residue 148–151 coordinates ATP; sequence GEKD. Residue glutamine 154 coordinates (R)-pantoate. ATP-binding positions include leucine 177 and 185 to 188; that span reads MSSR.

This sequence belongs to the pantothenate synthetase family. Homodimer.

It is found in the cytoplasm. It carries out the reaction (R)-pantoate + beta-alanine + ATP = (R)-pantothenate + AMP + diphosphate + H(+). It participates in cofactor biosynthesis; (R)-pantothenate biosynthesis; (R)-pantothenate from (R)-pantoate and beta-alanine: step 1/1. In terms of biological role, catalyzes the condensation of pantoate with beta-alanine in an ATP-dependent reaction via a pantoyl-adenylate intermediate. This chain is Pantothenate synthetase, found in Acidiphilium cryptum (strain JF-5).